A 738-amino-acid polypeptide reads, in one-letter code: Probable trehalase (738 aa).

Residues methionine 1 to threonine 44 are disordered. Residues arginine 289, tryptophan 296–aspartate 297, asparagine 333, arginine 342, arginine 342–glutamine 344, and glycine 463 contribute to the substrate site. Catalysis depends on proton donor/acceptor residues aspartate 465 and glutamate 660.

This sequence belongs to the glycosyl hydrolase 37 family.

It catalyses the reaction alpha,alpha-trehalose + H2O = alpha-D-glucose + beta-D-glucose. This Eremothecium gossypii (strain ATCC 10895 / CBS 109.51 / FGSC 9923 / NRRL Y-1056) (Yeast) protein is Probable trehalase (NTH2).